The chain runs to 391 residues: Na(+)/H(+) antiporter NhaA (391 aa).

11 helical membrane passes run 14–34, 59–79, 95–115, 124–144, 154–174, 177–197, 213–233, 261–281, 287–307, 328–348, and 363–383; these read AGGI…NSPL, LLLW…GLEV, SLPT…YLFF, VGWA…MALL, VFLL…IALF, TDLS…LVAL, IILW…GVVI, FLIL…NVGF, PVPV…VLLF, IAPV…IASL, and IGIL…LSKV.

The protein belongs to the NhaA Na(+)/H(+) (TC 2.A.33) antiporter family.

Its subcellular location is the cell inner membrane. It carries out the reaction Na(+)(in) + 2 H(+)(out) = Na(+)(out) + 2 H(+)(in). Functionally, na(+)/H(+) antiporter that extrudes sodium in exchange for external protons. This chain is Na(+)/H(+) antiporter NhaA, found in Shewanella amazonensis (strain ATCC BAA-1098 / SB2B).